A 450-amino-acid polypeptide reads, in one-letter code: Molybdate-anion transporter (450 aa).

12 helical membrane-spanning segments follow: residues 1 to 21 (MLVTAYLAFVGLLASCLGLEL), 43 to 63 (LDFYQVYFLALAADWLQAPYL), 79 to 99 (ILYVCGLASTVLFGLVASSLV), 128 to 148 (FVLLVGRALGGLSTALLFSAF), 174 to 194 (AAFWNHVLAVVAGVAAEAVAS), 195 to 215 (WIGLGPVAPFVAAIPLLALAG), 249 to 269 (VLLLGTIQALFESVIFIFVFL), 278 to 298 (GAPLGIVFSSFMAASLLGSSL), 311 to 331 (PMHLLSLAVLIVVFSLFMLTF), 344 to 364 (FIAFLLIELACGLYFPSMSFL), 376 to 396 (GVLNWFRVPLHLLACLGLLVL), and 409 to 429 (FSICSAVMVMALLAVVGLFTV).

This sequence belongs to the major facilitator superfamily.

The protein resides in the cell membrane. In terms of biological role, mediates high-affinity intracellular uptake of the rare oligo-element molybdenum. The sequence is that of Molybdate-anion transporter (MFSD5) from Pongo abelii (Sumatran orangutan).